A 279-amino-acid chain; its full sequence is Acetylglutamate kinase (279 aa).

Residues 64-65, R86, and N177 contribute to the substrate site; that span reads GG.

Belongs to the acetylglutamate kinase family. ArgB subfamily.

Its subcellular location is the cytoplasm. It carries out the reaction N-acetyl-L-glutamate + ATP = N-acetyl-L-glutamyl 5-phosphate + ADP. Its pathway is amino-acid biosynthesis; L-arginine biosynthesis; N(2)-acetyl-L-ornithine from L-glutamate: step 2/4. In terms of biological role, catalyzes the ATP-dependent phosphorylation of N-acetyl-L-glutamate. The chain is Acetylglutamate kinase from Campylobacter jejuni subsp. jejuni serotype O:6 (strain 81116 / NCTC 11828).